Reading from the N-terminus, the 77-residue chain is Small ribosomal subunit protein bS18 (77 aa).

The protein belongs to the bacterial ribosomal protein bS18 family. Part of the 30S ribosomal subunit. Forms a tight heterodimer with protein bS6.

Binds as a heterodimer with protein bS6 to the central domain of the 16S rRNA, where it helps stabilize the platform of the 30S subunit. The sequence is that of Small ribosomal subunit protein bS18 from Bacillus cytotoxicus (strain DSM 22905 / CIP 110041 / 391-98 / NVH 391-98).